We begin with the raw amino-acid sequence, 79 residues long: Acyl carrier protein (79 aa).

The Carrier domain maps to 2–77 (SEIGERVKKI…DATKFLEKNA (76 aa)). At Ser37 the chain carries O-(pantetheine 4'-phosphoryl)serine.

The protein belongs to the acyl carrier protein (ACP) family. 4'-phosphopantetheine is transferred from CoA to a specific serine of apo-ACP by AcpS. This modification is essential for activity because fatty acids are bound in thioester linkage to the sulfhydryl of the prosthetic group.

The protein resides in the cytoplasm. Its pathway is lipid metabolism; fatty acid biosynthesis. In terms of biological role, carrier of the growing fatty acid chain in fatty acid biosynthesis. The polypeptide is Acyl carrier protein (Afipia carboxidovorans (strain ATCC 49405 / DSM 1227 / KCTC 32145 / OM5) (Oligotropha carboxidovorans)).